The primary structure comprises 389 residues: MFIVMTIVFFLVNSTGQTPLSATSSKDLEAVKTQLDAFGFNDPLIVRYGRYWQTLFSGSLGTYYSSPNQTIDQIVFGRVPNTLYVVLISFFIGSLLGIIFGMISGLFRGKLIDAVINVLVVLFVSIPSFVVGLGLLKAAGLFRLPPRFINFDDANFNFGNFLLASIIPILSLVFYTSAAFTYRVRNEVVEVMNQDYIKTARSKGLSTFAVALYHIFRNSIIPSVPLFVFGISGAFSGGFIIESLFGVQGVSRILIDSVQSNETNLVMFNIMFIQGIPLLASVFIELIYVLVDPRIRIASAGGVSLWTKLKFVYLRQAWLRKWRRINHTNSHNVLFNSPQHRQLLELKAIDYKHNTISLTEQQKTTLKIEPTANFVLLGTKCLKIITIHG.

Transmembrane regions (helical) follow at residues 1–21, 83–103, 115–135, 161–181, 220–240, and 270–290; these read MFIVMTIVFFLVNSTGQTPLS, LYVVLISFFIGSLLGIIFGMI, VINVLVVLFVSIPSFVVGLGL, FLLASIIPILSLVFYTSAAFT, IIPSVPLFVFGISGAFSGGFI, and IMFIQGIPLLASVFIELIYVL. In terms of domain architecture, ABC transmembrane type-1 spans 79–289; that stretch reads VPNTLYVVLI…ASVFIELIYV (211 aa).

The protein belongs to the binding-protein-dependent transport system permease family. OppBC subfamily. In terms of assembly, the complex is composed of two ATP-binding proteins (OppD and OppF), two transmembrane proteins (OppB and OppC) and a solute-binding protein (OppA).

The protein resides in the cell membrane. In terms of biological role, part of the ABC transporter complex OppABCDF involved in the uptake of oligopeptides. Probably responsible for the translocation of the substrate across the membrane. This Mycoplasma pneumoniae (strain ATCC 29342 / M129 / Subtype 1) (Mycoplasmoides pneumoniae) protein is Oligopeptide transport system permease protein OppB (oppB).